We begin with the raw amino-acid sequence, 175 residues long: Large ribosomal subunit protein uL15 (175 aa).

Basic and acidic residues predominate over residues 1-13 (MTIKLNELRDNNG). 2 disordered regions span residues 1–44 (MTIK…KARS) and 150–175 (VELP…AKNA). Over residues 23-37 (RGIGSGKGKTAGRGQ) the composition is skewed to gly residues.

Belongs to the universal ribosomal protein uL15 family. In terms of assembly, part of the 50S ribosomal subunit.

Binds to the 23S rRNA. The sequence is that of Large ribosomal subunit protein uL15 from Sphingopyxis alaskensis (strain DSM 13593 / LMG 18877 / RB2256) (Sphingomonas alaskensis).